The following is a 348-amino-acid chain: Lysophosphatidic acid receptor 2 (348 aa).

Residues 1-30 are Extracellular-facing; that stretch reads MGQCYYNETIGFFYNNSGKELSSHWRPKDV. Residues Asn-7 and Asn-15 are each glycosylated (N-linked (GlcNAc...) asparagine). Residues 31–51 traverse the membrane as a helical segment; it reads VVVALGLTVSVLVLLTNLLVI. The Cytoplasmic segment spans residues 52–66; that stretch reads AAIASNRRFHQPIYY. Residues 67–87 traverse the membrane as a helical segment; sequence LLGNLAAADLFAGVAYLFLMF. Over 88-100 the chain is Extracellular; sequence HTGPRTARLSLEG. The helical transmembrane segment at 101–123 threads the bilayer; it reads WFLRQGLLDTSLTASVATLLAIA. The Cytoplasmic segment spans residues 124–143; the sequence is VERHRSVMAVQLHSRLPRGR. A helical membrane pass occupies residues 144 to 164; the sequence is VVMLIVGVWVAALGLGLLPAH. The Extracellular portion of the chain corresponds to 165-185; it reads SWHCLCALDRCSRMAPLLSRS. A helical transmembrane segment spans residues 186-206; the sequence is YLAVWALSSLLVFLLMVAVYT. The Cytoplasmic segment spans residues 207–239; sequence RIFFYVRRRVQRMAEHVSCHPRYRETTLSLVKT. A helical membrane pass occupies residues 240–260; sequence VVIILGAFVVCWTPGQVVLLL. Residues 261–276 lie on the Extracellular side of the membrane; that stretch reads DGLGCESCNVLAVEKY. The helical transmembrane segment at 277–294 threads the bilayer; that stretch reads FLLLAEANSLVNAAVYSC. At 295–348 the chain is on the cytoplasmic side; the sequence is RDAEMRRTFRRLLCCACLRQSTRESVHYTSSAQGGASTRIMLPENGHPLMDSTL. The S-palmitoyl cysteine moiety is linked to residue Cys-308. The PDZ-binding motif lies at 345–348; that stretch reads DSTL.

This sequence belongs to the G-protein coupled receptor 1 family. Interacts with SLC9A3R2/NHERF2, MAGI3 and PLCB3. Interacts with RALA and GRK2. As to expression, expressed most abundantly in testes and peripheral blood leukocytes with less expression in pancreas, spleen, thymus and prostate. Little or no expression in heart, brain, placenta, lung, liver, skeletal muscle, kidney, ovary, small intestine, or colon.

Its subcellular location is the cell surface. The protein resides in the cell membrane. In terms of biological role, receptor for lysophosphatidic acid (LPA), a mediator of diverse cellular activities. Seems to be coupled to the G(i)/G(o), G(12)/G(13), and G(q) families of heteromeric G proteins. Plays a key role in phospholipase C-beta (PLC-beta) signaling pathway. Stimulates phospholipase C (PLC) activity in a manner that is independent of RALA activation. The polypeptide is Lysophosphatidic acid receptor 2 (Homo sapiens (Human)).